A 175-amino-acid chain; its full sequence is Putative lipoprotein LppN (175 aa).

An N-terminal signal peptide occupies residues 1–20 (MRLPGRHVLYALSAVTMLAA). Residue cysteine 21 is the site of N-palmitoyl cysteine attachment. Cysteine 21 is lipidated: S-diacylglycerol cysteine. The interval 31–56 (ASTNMNPTNPPATAETATVSPTPAPQ) is disordered. Low complexity predominate over residues 33–48 (TNMNPTNPPATAETAT). 3 prevents bacterial uptake by a human macrophage-like cell line regions span residues 61-80 (ETWI…PADL), 101-120 (RAPV…DCAA), and 121-140 (GFAP…VAYL).

It localises to the cell membrane. The protein resides in the cell surface. Functionally, probably involved in bacterial recognition and uptake by its host (human). In Mycobacterium tuberculosis (strain ATCC 25618 / H37Rv), this protein is Putative lipoprotein LppN (lppN).